The following is an 89-amino-acid chain: Co-chaperonin GroES (89 aa).

It belongs to the GroES chaperonin family. In terms of assembly, heptamer of 7 subunits arranged in a ring. Interacts with the chaperonin GroEL.

The protein localises to the cytoplasm. Together with the chaperonin GroEL, plays an essential role in assisting protein folding. The GroEL-GroES system forms a nano-cage that allows encapsulation of the non-native substrate proteins and provides a physical environment optimized to promote and accelerate protein folding. GroES binds to the apical surface of the GroEL ring, thereby capping the opening of the GroEL channel. This Wolinella succinogenes (strain ATCC 29543 / DSM 1740 / CCUG 13145 / JCM 31913 / LMG 7466 / NCTC 11488 / FDC 602W) (Vibrio succinogenes) protein is Co-chaperonin GroES.